The chain runs to 246 residues: uncharacterized protein (246 aa).

The first 24 residues, 1–24 (MGAPLRHCLLVAAALSLGCGVAAA), serve as a signal peptide directing secretion. The next 2 helical transmembrane spans lie at 71 to 91 (YYLG…IGLV) and 104 to 124 (FTCA…AGGA).

It localises to the cell membrane. This is an uncharacterized protein from Mycobacterium tuberculosis (strain ATCC 25618 / H37Rv).